The following is a 412-amino-acid chain: Alanyl-tRNA editing protein Aarsd1 (412 aa).

Zn(2+)-binding residues include His109 and His113. Ser174 is modified (phosphoserine). Cys209 and His213 together coordinate Zn(2+).

It belongs to the class-II aminoacyl-tRNA synthetase family. Alax-L subfamily. Zn(2+) serves as cofactor.

The protein localises to the cytoplasm. Functionally, functions in trans to edit the amino acid moiety from incorrectly charged Ser-tRNA(Ala). In Mus musculus (Mouse), this protein is Alanyl-tRNA editing protein Aarsd1 (Aarsd1).